The sequence spans 310 residues: Olfactory receptor 7A42 (310 aa).

Residues 1–25 lie on the Extracellular side of the membrane; that stretch reads MESGNSTRRIPSFFLLGFSENPHLQ. N-linked (GlcNAc...) asparagine glycosylation is present at asparagine 5. A helical transmembrane segment spans residues 26-46; that stretch reads FLIFVLFLSMYLVTVLGNLLI. Residues 47–67 are Cytoplasmic-facing; it reads IMVIITQSPLHTPMYFFLANL. The helical transmembrane segment at 68–88 threads the bilayer; sequence SFVDICFTSTTVPKMLVNIQT. Residues 89 to 100 are Extracellular-facing; the sequence is QSKAITYADCIS. A disulfide bridge links cysteine 98 with cysteine 190. A helical membrane pass occupies residues 101-121; that stretch reads QMSVFLVFAELDNFLLAVMAY. At 122-135 the chain is on the cytoplasmic side; the sequence is DRYVAICHPLYYTF. The helical transmembrane segment at 136–156 threads the bilayer; sequence IVNQHLCILMVLLSWVVSILH. Residues 157 to 202 are Extracellular-facing; that stretch reads AFLQSSIVLQLTFCGDVKIPHFFCELNQLSQLTCLDSLSSHLIMNL. The chain crosses the membrane as a helical span at residues 203 to 223; that stretch reads VPVLLAVISFSSILYSYFKIV. Topologically, residues 224–240 are cytoplasmic; the sequence is SSICSISSVQGKYTAFS. A helical membrane pass occupies residues 241–261; it reads TCVSHLSIVFLFYSTGLGVYV. The Extracellular portion of the chain corresponds to 262-272; it reads SSAVVQSSHSA. Residues 273–293 form a helical membrane-spanning segment; that stretch reads ARASVMYTVVTPMLNPFIYSL. Residues 294-310 are Cytoplasmic-facing; sequence RNKDVKKALERLLEGKL.

It belongs to the G-protein coupled receptor 1 family.

The protein localises to the cell membrane. In terms of biological role, odorant receptor. The protein is Olfactory receptor 7A42 of Mus musculus (Mouse).